Consider the following 464-residue polypeptide: AAC-rich mRNA clone AAC11 protein (464 aa).

Polar residues predominate over residues 1 to 15 (MSTPTLPNLSQLHGI). Disordered stretches follow at residues 1–112 (MSTP…HGTN) and 125–464 (SLPQ…SFFH). Composition is skewed to low complexity over residues 16–65 (QNQS…QQPQ), 78–88 (NPNGLGLMGHN), and 130–160 (INNN…NNSN). Polar residues predominate over residues 161 to 174 (LGINSSPTQSSANS). 3 DNA-binding regions (a.T hook) span residues 177–189 (KRSR…NPPS), 198–210 (KRKR…MDEE), and 224–236 (NKKR…PKDE). Positions 240 to 253 (DYNNTSFSDSNTDG) are enriched in polar residues. Positions 255–267 (PKKRGRPPKAKGD) form a DNA-binding region, a.T hook 4. The segment covering 276–428 (NTLGNGILNS…NNAGNLGNLG (153 aa)) has biased composition (low complexity). Over residues 433–464 (LHSSDPNNPNAQKSFPDSTNTMDFQPNFSFFH) the composition is skewed to polar residues.

The protein is AAC-rich mRNA clone AAC11 protein (AAC11) of Dictyostelium discoideum (Social amoeba).